A 224-amino-acid chain; its full sequence is Urease accessory protein UreF (224 aa).

The protein belongs to the UreF family. UreD, UreF and UreG form a complex that acts as a GTP-hydrolysis-dependent molecular chaperone, activating the urease apoprotein by helping to assemble the nickel containing metallocenter of UreC. The UreE protein probably delivers the nickel.

It localises to the cytoplasm. Its function is as follows. Required for maturation of urease via the functional incorporation of the urease nickel metallocenter. The polypeptide is Urease accessory protein UreF (Pseudomonas putida (strain ATCC 700007 / DSM 6899 / JCM 31910 / BCRC 17059 / LMG 24140 / F1)).